The chain runs to 201 residues: MTQTDPAFQNLLAEFQALHAREPALAGFVALPDSLTPQPVTPVRIPPAALMESDPDLTTTAYAAIRDAFIAAGAVAQWRLTYQGSRLGADFMDRFACYCLIGEGGPFASDSLAAYVVYMPAGLYYPFHQHPAEEIYFILAGEAEFLMEGHPPRRLGPGDHVFHPSGHPHATRTYDRPFMALVLWRGDLETAPVLTYPEGEI.

A divalent metal cation is bound by residues histidine 130, glutamate 134, tyrosine 136, and histidine 169.

Belongs to the non-heme iron-dependent dioxygenase family. As to quaternary structure, homodimer. It depends on a divalent metal cation as a cofactor.

The catalysed reaction is S,S-dimethyl-beta-propiothetin = acrylate + dimethyl sulfide + H(+). May act as a dimethylsulfoniopropionate (DMSP) in vitro, releasing dimethyl sulfide (DMS). DMS is the principal form by which sulfur is transported from oceans to the atmosphere. The real activity of the protein is however subject to debate and it is unclear whether it constitutes a real dimethylsulfoniopropionate lyase in vivo. The polypeptide is Dimethylsulfoniopropionate lyase DddQ (Ruegeria pomeroyi (strain ATCC 700808 / DSM 15171 / DSS-3) (Silicibacter pomeroyi)).